The chain runs to 418 residues: Serine--tRNA ligase (418 aa).

226 to 228 is a binding site for L-serine; sequence TSE. ATP-binding positions include 257 to 259 and V273; that span reads RRE. E280 contributes to the L-serine binding site. Residue 344 to 347 participates in ATP binding; sequence ELTS. T379 contacts L-serine.

It belongs to the class-II aminoacyl-tRNA synthetase family. Type-1 seryl-tRNA synthetase subfamily. Homodimer. The tRNA molecule binds across the dimer.

The protein localises to the cytoplasm. The enzyme catalyses tRNA(Ser) + L-serine + ATP = L-seryl-tRNA(Ser) + AMP + diphosphate + H(+). The catalysed reaction is tRNA(Sec) + L-serine + ATP = L-seryl-tRNA(Sec) + AMP + diphosphate + H(+). The protein operates within aminoacyl-tRNA biosynthesis; selenocysteinyl-tRNA(Sec) biosynthesis; L-seryl-tRNA(Sec) from L-serine and tRNA(Sec): step 1/1. Catalyzes the attachment of serine to tRNA(Ser). Is also able to aminoacylate tRNA(Sec) with serine, to form the misacylated tRNA L-seryl-tRNA(Sec), which will be further converted into selenocysteinyl-tRNA(Sec). The chain is Serine--tRNA ligase from Mycobacteroides abscessus (strain ATCC 19977 / DSM 44196 / CCUG 20993 / CIP 104536 / JCM 13569 / NCTC 13031 / TMC 1543 / L948) (Mycobacterium abscessus).